Here is a 223-residue protein sequence, read N- to C-terminus: DNA mismatch repair protein MutH (223 aa).

Belongs to the MutH family.

The protein localises to the cytoplasm. Sequence-specific endonuclease that cleaves unmethylated GATC sequences. It is involved in DNA mismatch repair. This Haemophilus influenzae (strain ATCC 51907 / DSM 11121 / KW20 / Rd) protein is DNA mismatch repair protein MutH.